A 423-amino-acid polypeptide reads, in one-letter code: Probable electron transfer flavoprotein-quinone oxidoreductase YgcN (423 aa).

7–21 (IIIIGAGIAGTACAL) provides a ligand contact to FAD.

Belongs to the ETF-QO/FixC family. The cofactor is FAD.

In terms of biological role, probably accepts electrons from YgcQ/YgcR and reduces a quinone. This chain is Probable electron transfer flavoprotein-quinone oxidoreductase YgcN (ygcN), found in Escherichia coli (strain K12).